A 608-amino-acid polypeptide reads, in one-letter code: Alpha-1,3-galactosidase A (608 aa).

The signal sequence occupies residues 1-21 (MQRRTFIKSISAMMATSTTLG). The N-palmitoyl cysteine moiety is linked to residue Cys-22. Cys-22 carries S-diacylglycerol cysteine lipidation. PbH1 repeat units follow at residues 262–292 (TKNT…KLDN), 318–340 (KGHV…NVHG), 426–448 (PDHV…LLTV), 449–470 (SGKI…KIGS), and 481–507 (VESV…DIVP).

The protein belongs to the glycosyl hydrolase 110 family. A subfamily.

It localises to the cell membrane. The catalysed reaction is Hydrolysis of terminal, non-reducing branched (1-&gt;3)-alpha-D-galactosidic residues, producing free D-galactose.. The enzyme catalyses Hydrolysis of terminal, non-reducing alpha-D-galactose residues in alpha-D-galactosides, including galactose oligosaccharides, galactomannans and galactolipids.. Its function is as follows. Alpha-galactosidase that specifically removes branched alpha-1,3-linked galactose residues present in blood group B antigens. Has no activity toward linear alpha-1,3-linked galactose residues. The protein is Alpha-1,3-galactosidase A (glaA) of Shewanella woodyi (strain ATCC 51908 / MS32).